Here is a 126-residue protein sequence, read N- to C-terminus: MSKVPINSSKLSCGGPYNQAVKSGGLIFCSGQAAVKDGNFVPGTIQEQTRLTIENLAEVLRVAGSSLEKLVKVNIFLTDIDDFAAMNEVYKEMLPDPMPARTTVAAGKIPLSSKGGKIEIECIAAE.

It belongs to the RutC family.

It is found in the mitochondrion. It localises to the cytoplasm. Its function is as follows. Plays a role in the maintenance of mitochondrial DNA. This chain is Protein mmf2, mitochondrial (mmf2), found in Schizosaccharomyces pombe (strain 972 / ATCC 24843) (Fission yeast).